A 662-amino-acid polypeptide reads, in one-letter code: UvrABC system protein B (662 aa).

Residues 31-188 (DNIEGGEKAQ…NDLVDIQFER (158 aa)) enclose the Helicase ATP-binding domain. 44–51 (GATGTGKT) is a binding site for ATP. Residues 97–120 (YYDYYQPEAYVPSSDTYIEKDSSV) carry the Beta-hairpin motif. Residues 435-601 (QIDDLLGEIN…TIKKEIRDLI (167 aa)) enclose the Helicase C-terminal domain. The UVR domain maps to 626-661 (KDMIKKLEGQMQEAAGLLDFELAAQIRDMILEIKAM).

This sequence belongs to the UvrB family. Forms a heterotetramer with UvrA during the search for lesions. Interacts with UvrC in an incision complex.

Its subcellular location is the cytoplasm. Its function is as follows. The UvrABC repair system catalyzes the recognition and processing of DNA lesions. A damage recognition complex composed of 2 UvrA and 2 UvrB subunits scans DNA for abnormalities. Upon binding of the UvrA(2)B(2) complex to a putative damaged site, the DNA wraps around one UvrB monomer. DNA wrap is dependent on ATP binding by UvrB and probably causes local melting of the DNA helix, facilitating insertion of UvrB beta-hairpin between the DNA strands. Then UvrB probes one DNA strand for the presence of a lesion. If a lesion is found the UvrA subunits dissociate and the UvrB-DNA preincision complex is formed. This complex is subsequently bound by UvrC and the second UvrB is released. If no lesion is found, the DNA wraps around the other UvrB subunit that will check the other stand for damage. In Streptococcus sanguinis (strain SK36), this protein is UvrABC system protein B.